Reading from the N-terminus, the 29-residue chain is Augerpeptide hheTx2 (29 aa).

Contains 4 disulfide bonds. Expressed by the venom duct.

The protein resides in the secreted. This is Augerpeptide hheTx2 from Hastula hectica (Sea snail).